Reading from the N-terminus, the 707-residue chain is Acyl-CoA ligase 891, peroxisomal (707 aa).

259-270 serves as a coordination point for ATP; sequence INYTSGTTGPPK. The tract at residues 525–549 is fatty acid-binding; it reads DGWFRTGDVCTIDEKGRFIIIDRRK. The Peroxisome targeting signal motif lies at 705-707; it reads AKL.

It belongs to the ATP-dependent AMP-binding enzyme family.

It localises to the peroxisome matrix. The catalysed reaction is (4E,8E)-10-(4-hydroxy-6-methoxy-7-methyl-3-oxo-1,3-dihydro-2-benzofuran-5-yl)-4,8-dimethyldeca-4,8-dienoate + ATP + CoA = (4E,8E)-10-(4-hydroxy-6-methoxy-7-methyl-3-oxo-1,3-dihydro-2-benzofuran-5-yl)-4,8-dimethyldeca-4,8-dienoyl-CoA + AMP + diphosphate. Its pathway is secondary metabolite biosynthesis; terpenoid biosynthesis. Acyl-CoA ligase involved in the biosynthesis of mycophenolic acid (MPA), the first isolated antibiotic natural product in the world obtained from a culture of Penicillium brevicompactum in 1893. The peroxisomal acyl-CoA ligase 891 converts the intermediate MFDHMP-3C into MFDHMP-3C-CoA which impairs its diffusion from the peroxisome. The first step of the pathway is the synthesis of 5-methylorsellinic acid (5MOA) by the cytosolic polyketide synthase mpaC. 5MOA is then converted to the phthalide compound 5,7-dihydroxy-4,6-dimethylphthalide (DHMP) by the endoplasmic reticulum-bound cytochrome P450 monooxygenase mpaDE. MpaDE first catalyzes hydroxylation of 5-MOA to 4,6-dihydroxy-2-(hydroxymethyl)-3-methylbenzoic acid (DHMB). MpaDE then acts as a lactone synthase that catalyzes the ring closure to convert DHMB into DHMP. The next step is the prenylation of DHMP by the Golgi apparatus-associated prenyltransferase mpaA to yield farnesyl-DHMP (FDHMP). The ER-bound oxygenase mpaB then mediates the oxidative cleavage the C19-C20 double bond in FDHMP to yield FDHMP-3C via a mycophenolic aldehyde intermediate. The O-methyltransferase mpaG catalyzes the methylation of FDHMP-3C to yield MFDHMP-3C. After the cytosolic methylation of FDHMP-3C, MFDHMP-3C enters into peroxisomes probably via free diffusion due to its low molecular weight. Upon a peroxisomal CoA ligation reaction, catalyzed by a beta-oxidation component enzyme acyl-CoA ligase ACL891, MFDHMP-3C-CoA would then be restricted to peroxisomes for the following beta-oxidation pathway steps. The peroxisomal beta-oxidation machinery than converts MFDHMP-3C-CoA into MPA_CoA, via a beta-oxidation chain-shortening process. Finally mpaH acts as a peroxisomal acyl-CoA hydrolase with high substrate specificity toward MPA-CoA to release the final product MPA. The protein is Acyl-CoA ligase 891, peroxisomal of Penicillium roqueforti (strain FM164).